Here is a 588-residue protein sequence, read N- to C-terminus: Protein gamma response 1 (588 aa).

Coiled-coil stretches lie at residues 64–104 and 164–281; these read AACD…LGKT and SEVK…KTVV. Composition is skewed to basic and acidic residues over residues 377-389, 465-484, and 508-525; these read KHSETAEGADKVR, NVKRVAGEEKHVHDVAKKDD, and TSKKSFKHVESVRKKAER. Disordered regions lie at residues 377–398 and 417–525; these read KHSETAEGADKVRIGTGSSGNN and PIVR…KAER.

Basal levels in mitotically dividing cells (meristems), and high levels in endoreduplicating cells (stipules, trichomes) (at protein level).

It localises to the nucleus. Seems to mediate cell cycle arrest before mitosis in response to DNA damage. Is probably also involved in the transition from mitosis to endoreduplication. The sequence is that of Protein gamma response 1 (GR1) from Arabidopsis thaliana (Mouse-ear cress).